A 497-amino-acid chain; its full sequence is MTSYQRTVTVRSSTAPKSFTSRSYTGGRFATKASTGPLSLGSVYGGGSGRIGATTAFSTSTSYGGGSSFSGISAGTGFPPITNVTVNKSLLAPLNLEIDPRIGQVRLEEKEQIKTLNNQFAGFIDKVRYLEQQNKLLETKWQLLQNQTTPSRSNLDSMFEAYISNLRRQLDTLGQEKGKLEAELHNMQGLVEDFKNKYEDEINKRTDTENEFVLIKKDVDEAYMNKVELEAKLEALTDEINFLRQIYDEEIRELQTQIQDTSVIVQMDNNRQLDLDNIIAEVRAQYEDMAKKSRAEAETYYQQKYEELSSSAGKYGDDLRNTKNEIAELTRYINRLNSDIDALKGQRANLEAAIAEAEERGEQAVKNAQAQLQELQNALTQAKQDMARQLREYQELMNVKLALDIEIATYRKLLEGEESRLASGIQAATVQVNQSSYSGVRAPILSSGFGSGSFQTSSYSSFPLETSYSSPKKSIIVKTIESRDGKIVSERSNIVKE.

Positions 2-108 (TSYQRTVTVR…DPRIGQVRLE (107 aa)) are head. Residues 109-149 (EKEQIKTLNNQFAGFIDKVRYLEQQNKLLETKWQLLQNQTT) are coil 1A. In terms of domain architecture, IF rod spans 109 to 421 (EKEQIKTLNN…KLLEGEESRL (313 aa)). Positions 145–162 (QNQTTPSRSNLDSMFEAY) are linker 1. The tract at residues 163 to 254 (ISNLRRQLDT…QIYDEEIREL (92 aa)) is coil 1B. Residues 255-278 (QTQIQDTSVIVQMDNNRQLDLDNI) form a linker 12 region. Residues 279 to 417 (IAEVRAQYED…ATYRKLLEGE (139 aa)) are coil 2. Residues 418–497 (ESRLASGIQA…VSERSNIVKE (80 aa)) are tail.

It belongs to the intermediate filament family. In terms of assembly, heterotetramer of two type I and two type II keratins. Keratin-8 associates with keratin-18. As to expression, expressed in skin.

The protein localises to the cytoplasm. It localises to the nucleus. The protein resides in the nucleoplasm. Its subcellular location is the nucleus matrix. Its function is as follows. Together with KRT19, helps to link the contractile apparatus to dystrophin at the costameres of striated muscle. This chain is Keratin, type II cytoskeletal 8, found in Protopterus aethiopicus (Marbled lungfish).